Reading from the N-terminus, the 366-residue chain is Actin-like protein 8 (366 aa).

It belongs to the actin family. As to expression, strongly expressed in testis and pancreas. Weak expression in placenta.

The protein localises to the cytoplasm. It is found in the cytoskeleton. The polypeptide is Actin-like protein 8 (ACTL8) (Homo sapiens (Human)).